A 189-amino-acid chain; its full sequence is Protein CURLY FLAG LEAF 1 (189 aa).

The EAR motif lies at 50–55 (TLELNS). The region spanning 57–91 (LSLPCHWEQCLDLKTGEIYYINWKNGMRVKEDPRK) is the WW domain. The interval 90-148 (RKVMNADPDSGDSYGTVCSEEDSSYYDSEESSSESSPSSRENHKEEEEEEEEEEEEEED) is disordered. 2 stretches are compositionally biased toward acidic residues: residues 108–121 (SEED…EESS) and 135–148 (EEEE…EEED).

In terms of assembly, interacts with BHLH122/CFLAP1 and BHLH80/CFLAP2. Binds to HDG1. As to expression, mostly observed in roots, flowers and siliques. Expressed in cells differentiated from epidermal cells such as trichomes, stigmatic papillar cells and guard cells, as well as in tissues undergoing abscission and dehiscence.

In terms of biological role, negatively regulates the cuticle development by interacting with the HD-ZIP IV transcription factor HDG1. The protein is Protein CURLY FLAG LEAF 1 of Arabidopsis thaliana (Mouse-ear cress).